Consider the following 358-residue polypeptide: Alanine racemase (358 aa).

Lys34 (proton acceptor; specific for D-alanine) is an active-site residue. The residue at position 34 (Lys34) is an N6-(pyridoxal phosphate)lysine. Residue Arg129 participates in substrate binding. Residue Tyr254 is the Proton acceptor; specific for L-alanine of the active site. Met302 is a substrate binding site.

Belongs to the alanine racemase family. The cofactor is pyridoxal 5'-phosphate.

It carries out the reaction L-alanine = D-alanine. Its pathway is amino-acid biosynthesis; D-alanine biosynthesis; D-alanine from L-alanine: step 1/1. In terms of biological role, catalyzes the interconversion of L-alanine and D-alanine. May also act on other amino acids. In Vibrio vulnificus (strain CMCP6), this protein is Alanine racemase (alr).